We begin with the raw amino-acid sequence, 742 residues long: 2'-5'-oligoadenylate synthase 2 (742 aa).

The interval 1-35 (MGNWLTGNWSSDRSSGYSSGWSPGGSSGVPSGPVH) is disordered. Glycine 2 is lipidated: N-myristoyl glycine. Residues 10–21 (SSDRSSGYSSGW) are compositionally biased toward low complexity. OAS domain stretches follow at residues 60–374 (VPSQ…YWDV) and 382–721 (TPSH…WKVP). N6-acetyllysine is present on lysine 417. Serine 436 provides a ligand contact to ATP. Aspartate 448, aspartate 450, and aspartate 519 together coordinate Mg(2+). Positions 582 and 585 each coordinate ATP.

The protein belongs to the 2-5A synthase family. In terms of assembly, homodimer. Mg(2+) is required as a cofactor. In terms of processing, myristoylation is not essential for its activity. Glycosylated. Glycosylation is essential for its activity. In terms of tissue distribution, expressed in the uterus. Expressed in mammary glands: expressed at low level before the establishment of lactation, then expression strongly increases, and subsequently decreases during early involution.

It is found in the cytoplasm. Its subcellular location is the perinuclear region. It carries out the reaction 3 ATP = 5'-triphosphoadenylyl-(2'-&gt;5')-adenylyl-(2'-&gt;5')-adenosine + 2 diphosphate. Its activity is regulated as follows. Produced as a latent enzyme which is activated by double stranded RNA (dsRNA) generated during the course of viral infection. The dsRNA activator must be at least 15 nucleotides long, and no modification of the 2'-hydroxyl group is tolerated. ssRNA or dsDNA do not act as activators. Strongly inhibited by copper, iron and zinc ions. Partially inhibited by cobalt and nickel ions. Its function is as follows. Interferon-induced, dsRNA-activated antiviral enzyme which plays a critical role in cellular innate antiviral response. Activated by detection of double stranded RNA (dsRNA): polymerizes higher oligomers of 2'-5'-oligoadenylates (2-5A) from ATP which then bind to the inactive monomeric form of ribonuclease L (RNASEL) leading to its dimerization and subsequent activation. Activation of RNASEL leads to degradation of cellular as well as viral RNA, resulting in the inhibition of protein synthesis, thus terminating viral replication. Can mediate the antiviral effect via the classical RNASEL-dependent pathway or an alternative antiviral pathway independent of RNASEL. In addition, it may also play a role in other cellular processes such as apoptosis, cell growth, differentiation and gene regulation. May act as a negative regulator of lactation, stopping lactation in virally infected mammary gland lobules, thereby preventing transmission of viruses to neonates. Non-infected lobules would not be affected, allowing efficient pup feeding during infection. In Mus musculus (Mouse), this protein is 2'-5'-oligoadenylate synthase 2.